Consider the following 150-residue polypeptide: Transcriptional repressor NrdR (150 aa).

A zinc finger spans residues 3 to 34 (CPFCHHPQSRVIDSRTVENGFVTRRRRQCTKC). Residues 46–136 (LLVEKRNGVT…VYKSFSSMED (91 aa)) form the ATP-cone domain.

Belongs to the NrdR family. It depends on Zn(2+) as a cofactor.

Negatively regulates transcription of bacterial ribonucleotide reductase nrd genes and operons by binding to NrdR-boxes. The sequence is that of Transcriptional repressor NrdR from Corynebacterium kroppenstedtii (strain DSM 44385 / JCM 11950 / CIP 105744 / CCUG 35717).